The sequence spans 72 residues: Aurein-2.3 (72 aa).

Residues 1-22 (MAFLKKSLFLVLFLGLVSLSIC) form the signal peptide. The propeptide occupies 23 to 49 (EKEKRQNGEDEDENEAANHEEGSEEKR). The segment at 27–47 (RQNGEDEDENEAANHEEGSEE) is disordered. Residues 38-47 (AANHEEGSEE) are compositionally biased toward basic and acidic residues. Residue leucine 65 is modified to Leucine amide. Positions 69-72 (NDVE) are excised as a propeptide.

Amidation is essential for antibacterial activity against Gram-positive bacteria. In terms of tissue distribution, expressed by the skin dorsal glands.

Its subcellular location is the secreted. The protein localises to the target cell membrane. Amphipathic alpha-helical antimicrobial peptide with weak to moderate activity against Gram-positive bacteria, and no activity against Gram-negative bacteria. Probably acts by disturbing membrane functions with its amphipathic structure. Strongly inhibits the formation of NO by neuronal nitric oxide synthase (nNOS) at micromolar concentrations. Acts by a non-competitive mechanism, probably by binding to calcium/calmodulin and as a consequence blocking calmodulin attachment to nNOS. The sequence is that of Aurein-2.3 from Ranoidea aurea (Green and golden bell frog).